Here is a 489-residue protein sequence, read N- to C-terminus: Tandem C2 domains nuclear protein (489 aa).

5 positions are modified to phosphoserine: serine 82, serine 155, serine 167, serine 173, and serine 210. Residues 189 to 214 (DSFSSVPSSSSSRKNSQGSNRSLDTI) are disordered. The span at 191-210 (FSSVPSSSSSRKNSQGSNRS) shows a compositional bias: low complexity. Phosphothreonine is present on residues threonine 213 and threonine 215. Position 217 is a phosphoserine (serine 217). C2 domains follow at residues 222-341 (DLGR…SLEI) and 343-470 (APSK…NQWK). The Nuclear localization signal motif lies at 446-448 (RRK).

Its subcellular location is the nucleus. This is Tandem C2 domains nuclear protein (Tc2n) from Mus musculus (Mouse).